The primary structure comprises 193 residues: Cryptic protein (193 aa).

Residues 1–25 (MFWRKHVRILFTVTLIWQAIHLGKG) form the signal peptide. 2 N-linked (GlcNAc...) asparagine glycosylation sites follow: N38 and N60. Intrachain disulfides connect C91/C103 and C105/C114. The region spanning 91–115 (CQNGGTCILGAFCACPKHFSGRHCE) is the EGF-like domain.

Belongs to the EGF-CFC (Cripto-1/FRL1/Cryptic) family.

It localises to the cell membrane. The protein localises to the secreted. In terms of biological role, may play a role in mesoderm and/or neural patterning during gastrulation. This is Cryptic protein (CFC1) from Gallus gallus (Chicken).